The chain runs to 452 residues: NADH-quinone oxidoreductase subunit N 2 (452 aa).

Transmembrane regions (helical) follow at residues 6–26 (VLIP…YGFI), 33–53 (TYIL…FNFG), 70–90 (TLRI…YSDL), 97–117 (SVEY…MIVA), 120–140 (LLIL…LAGF), 154–174 (YFIL…FFYA), 194–214 (ILLG…LAPF), 232–252 (FLST…FLSI), 258–278 (IQDL…VLAL), 286–306 (MLAY…LLPE), 311–331 (ISLI…FAFI), 355–375 (FCII…GFIV), 387–407 (GYGS…FYYL), and 432–452 (ALSG…LLIF).

It belongs to the complex I subunit 2 family. As to quaternary structure, NDH-1 is composed of 14 different subunits. Subunits NuoA, H, J, K, L, M, N constitute the membrane sector of the complex.

The protein resides in the cell inner membrane. The catalysed reaction is a quinone + NADH + 5 H(+)(in) = a quinol + NAD(+) + 4 H(+)(out). Functionally, NDH-1 shuttles electrons from NADH, via FMN and iron-sulfur (Fe-S) centers, to quinones in the respiratory chain. The immediate electron acceptor for the enzyme in this species is believed to be ubiquinone. Couples the redox reaction to proton translocation (for every two electrons transferred, four hydrogen ions are translocated across the cytoplasmic membrane), and thus conserves the redox energy in a proton gradient. The sequence is that of NADH-quinone oxidoreductase subunit N 2 from Thermodesulfovibrio yellowstonii (strain ATCC 51303 / DSM 11347 / YP87).